A 154-amino-acid chain; its full sequence is Ribosomal RNA large subunit methyltransferase H (154 aa).

S-adenosyl-L-methionine is bound by residues Leu-76, Gly-103, and 122-127 (LSPLTL).

The protein belongs to the RNA methyltransferase RlmH family. In terms of assembly, homodimer.

The protein resides in the cytoplasm. It carries out the reaction pseudouridine(1915) in 23S rRNA + S-adenosyl-L-methionine = N(3)-methylpseudouridine(1915) in 23S rRNA + S-adenosyl-L-homocysteine + H(+). Functionally, specifically methylates the pseudouridine at position 1915 (m3Psi1915) in 23S rRNA. The protein is Ribosomal RNA large subunit methyltransferase H of Wolinella succinogenes (strain ATCC 29543 / DSM 1740 / CCUG 13145 / JCM 31913 / LMG 7466 / NCTC 11488 / FDC 602W) (Vibrio succinogenes).